Consider the following 162-residue polypeptide: Thy-1 membrane glycoprotein (162 aa).

A signal peptide spans 1-19; the sequence is MNPAISVALLLSVLQVSRG. The residue at position 20 (Q20) is a Pyrrolidone carboxylic acid. The region spanning 20–127 is the Ig-like V-type domain; that stretch reads QKVTSLTACL…NKSISVYRDK (108 aa). Intrachain disulfides connect C28–C131 and C38–C105. Residues N42, N94, and N118 are each glycosylated (N-linked (GlcNAc...) asparagine). C131 carries the GPI-anchor amidated cysteine; alternate lipid modification. A propeptide spans 132-162 (removed in mature form); the sequence is GGISLLVQNTSWMLLLLLSLSLLQALDFISL.

Its subcellular location is the cell membrane. May play a role in cell-cell or cell-ligand interactions during synaptogenesis and other events in the brain. This Mus musculus (Mouse) protein is Thy-1 membrane glycoprotein (Thy1).